Here is a 156-residue protein sequence, read N- to C-terminus: Ribosomal RNA large subunit methyltransferase H (156 aa).

S-adenosyl-L-methionine contacts are provided by residues L73, G104, and L123–L128.

It belongs to the RNA methyltransferase RlmH family. In terms of assembly, homodimer.

The protein resides in the cytoplasm. The enzyme catalyses pseudouridine(1915) in 23S rRNA + S-adenosyl-L-methionine = N(3)-methylpseudouridine(1915) in 23S rRNA + S-adenosyl-L-homocysteine + H(+). Functionally, specifically methylates the pseudouridine at position 1915 (m3Psi1915) in 23S rRNA. In Pectobacterium carotovorum subsp. carotovorum (strain PC1), this protein is Ribosomal RNA large subunit methyltransferase H.